A 178-amino-acid chain; its full sequence is Adenine phosphoribosyltransferase (178 aa).

This sequence belongs to the purine/pyrimidine phosphoribosyltransferase family. As to quaternary structure, homodimer.

It localises to the cytoplasm. It catalyses the reaction AMP + diphosphate = 5-phospho-alpha-D-ribose 1-diphosphate + adenine. It participates in purine metabolism; AMP biosynthesis via salvage pathway; AMP from adenine: step 1/1. Functionally, catalyzes a salvage reaction resulting in the formation of AMP, that is energically less costly than de novo synthesis. This Cereibacter sphaeroides (strain ATCC 17023 / DSM 158 / JCM 6121 / CCUG 31486 / LMG 2827 / NBRC 12203 / NCIMB 8253 / ATH 2.4.1.) (Rhodobacter sphaeroides) protein is Adenine phosphoribosyltransferase.